The sequence spans 168 residues: Cell division inhibitor SulA (168 aa).

The segment at 106 to 112 is ftsZ binding; that stretch reads ALLTGNY. A lon protease binding region spans residues 161-168; the sequence is KIHSYLYH.

The protein belongs to the SulA family. In terms of assembly, interacts with FtsZ. Is rapidly cleaved and degraded by the Lon protease once DNA damage is repaired.

In terms of biological role, component of the SOS system and an inhibitor of cell division. Accumulation of SulA causes rapid cessation of cell division and the appearance of long, non-septate filaments. In the presence of GTP, binds a polymerization-competent form of FtsZ in a 1:1 ratio, thus inhibiting FtsZ polymerization and therefore preventing it from participating in the assembly of the Z ring. This mechanism prevents the premature segregation of damaged DNA to daughter cells during cell division. This is Cell division inhibitor SulA from Yersinia pestis bv. Antiqua (strain Antiqua).